The chain runs to 129 residues: Fluoride-specific ion channel FluC 2 (129 aa).

4 consecutive transmembrane segments (helical) span residues Phe3–Trp23, Ala32–Ala52, Leu59–Phe79, and Gly90–Val110. Residues Gly71 and Thr74 each contribute to the Na(+) site.

This sequence belongs to the fluoride channel Fluc/FEX (TC 1.A.43) family.

Its subcellular location is the cell membrane. It carries out the reaction fluoride(in) = fluoride(out). Na(+) is not transported, but it plays an essential structural role and its presence is essential for fluoride channel function. Fluoride-specific ion channel. Important for reducing fluoride concentration in the cell, thus reducing its toxicity. The chain is Fluoride-specific ion channel FluC 2 from Listeria innocua serovar 6a (strain ATCC BAA-680 / CLIP 11262).